The following is a 273-amino-acid chain: Photosystem I chlorophyll a/b-binding protein 3-1, chloroplastic (273 aa).

The N-terminal 39 residues, methionine 1–valine 39, are a transit peptide targeting the chloroplast. Position 56 (tryptophan 56) interacts with chlorophyll b. Residues phenylalanine 76, serine 82, and glutamate 100 each contribute to the chlorophyll a site. Arginine 105 is a binding site for chlorophyll b. A helical transmembrane segment spans residues phenylalanine 106–isoleucine 126. Position 140 (isoleucine 140) interacts with chlorophyll b. A helical membrane pass occupies residues tyrosine 146–alanine 166. Residues glutamate 167 and arginine 170 each coordinate chlorophyll b. Serine 195 carries the phosphoserine modification. Positions 224, 225, 228, 230, 242, and 257 each coordinate chlorophyll a. Residues leucine 231–tyrosine 251 form a helical membrane-spanning segment. Phenylalanine 272 contributes to the chlorophyll b binding site.

This sequence belongs to the light-harvesting chlorophyll a/b-binding (LHC) protein family. The LHC complex consists of chlorophyll a-b binding proteins. Red-emitting heterodimer with LHCA2. Interacts with LHCA5. Binds to carotenoids. Binds at least 14 chlorophylls (8 Chl-a and 6 Chl-b) and carotenoids such as lutein and neoxanthin. serves as cofactor. In terms of processing, photoregulated by reversible phosphorylation of its threonine residues.

It localises to the plastid. The protein localises to the chloroplast thylakoid membrane. In terms of biological role, the light-harvesting complex (LHC) functions as a light receptor, it captures and delivers excitation energy to photosystems with which it is closely associated, here photosystem I. The sequence is that of Photosystem I chlorophyll a/b-binding protein 3-1, chloroplastic from Arabidopsis thaliana (Mouse-ear cress).